The primary structure comprises 589 residues: uncharacterized protein (589 aa).

4 disordered regions span residues 328–365 (LSSTSDASAAPAGVAGGGKARQMQFSQGGSGQGAEDGP), 379–459 (SLLG…DPSN), 525–555 (RSTSRLDAGEGQGDDDDEEDGQAEKYEGAVK), and 569–589 (VRGTKVVVQPSPPGDDSSRDM). A compositionally biased stretch (polar residues) spans 398-425 (VSLSSASTSARPTQRRSSLTPCSQTPQE). Residues 426 to 445 (THQHAREALTTRMESQREAN) are compositionally biased toward basic and acidic residues. Residues 536–545 (QGDDDDEEDG) show a composition bias toward acidic residues.

This is an uncharacterized protein from Mycosarcoma maydis (Corn smut fungus).